Reading from the N-terminus, the 121-residue chain is Small ribosomal subunit protein uS13 (121 aa).

The tract at residues 97 to 121 is disordered; it reads VRGQRTRTNARTRRGARKTVAGKKK. A compositionally biased stretch (basic residues) spans 100–121; that stretch reads QRTRTNARTRRGARKTVAGKKK.

This sequence belongs to the universal ribosomal protein uS13 family. In terms of assembly, part of the 30S ribosomal subunit. Forms a loose heterodimer with protein S19. Forms two bridges to the 50S subunit in the 70S ribosome.

In terms of biological role, located at the top of the head of the 30S subunit, it contacts several helices of the 16S rRNA. In the 70S ribosome it contacts the 23S rRNA (bridge B1a) and protein L5 of the 50S subunit (bridge B1b), connecting the 2 subunits; these bridges are implicated in subunit movement. Contacts the tRNAs in the A and P-sites. The polypeptide is Small ribosomal subunit protein uS13 (Prochlorococcus marinus (strain MIT 9313)).